The chain runs to 460 residues: Sexual development regulator velC (460 aa).

Disordered regions lie at residues 67-131 (VGPD…PQAP), 152-216 (YAPR…RPDP), and 422-460 (KKGN…SARQ). Over residues 192-207 (PVTTNGRPPDSNSPMV) the composition is skewed to polar residues. The Velvet domain maps to 239–422 (LSDNRFNLQI…KEQGCIISIK (184 aa)). Residues 423-437 (KGNDRSKNTRSHDDS) show a composition bias toward basic and acidic residues. A compositionally biased stretch (basic residues) spans 451–460 (GKRRRRSARQ).

The protein belongs to the velvet family. VelC subfamily. As to quaternary structure, interacts with VE1.

It is found in the nucleus. Functionally, velvet-domain-containing protein that acts as a positive regulator of sexual development. Dispensable for regulation of conidial size, hyphal hydrophobicity, fumonisin production, and oxidant resistance. The protein is Sexual development regulator velC of Gibberella moniliformis (strain M3125 / FGSC 7600) (Maize ear and stalk rot fungus).